The sequence spans 483 residues: GTPase Obg (483 aa).

One can recognise an Obg domain in the interval 2-159 (SRFIDRVVLH…RDLVLELKSV (158 aa)). The region spanning 160 to 340 (ADVGLLGFPS…LTFALAKMVR (181 aa)) is the OBG-type G domain. GTP is bound by residues 166–173 (GFPSAGKS), 191–195 (FTTLV), 212–215 (DVPG), 292–295 (NKTD), and 321–323 (SAV). Mg(2+) contacts are provided by S173 and T193. The OCT domain occupies 358 to 438 (PVKVKDSSFT…IGDVSFEWEP (81 aa)).

It belongs to the TRAFAC class OBG-HflX-like GTPase superfamily. OBG GTPase family. In terms of assembly, monomer. Mg(2+) serves as cofactor.

The protein resides in the cytoplasm. Functionally, an essential GTPase which binds GTP, GDP and possibly (p)ppGpp with moderate affinity, with high nucleotide exchange rates and a fairly low GTP hydrolysis rate. Plays a role in control of the cell cycle, stress response, ribosome biogenesis and in those bacteria that undergo differentiation, in morphogenesis control. In Rhodococcus erythropolis (strain PR4 / NBRC 100887), this protein is GTPase Obg.